The primary structure comprises 522 residues: Signal transduction histidine-protein kinase/phosphatase MprB (522 aa).

The Cytoplasmic portion of the chain corresponds to 1-30 (MIRLHRPQRPPLRAPLRATPSLSLRWRVML). The helical transmembrane segment at 31 to 51 (LAMSMVAMVVVLMAFAVYAVI) threads the bilayer. Residues 52–167 (SAALYSDIDN…PTEAVMNKLR (116 aa)) are Extracellular-facing. Residues 168–188 (WVLLIVGGVGVAVAAVAGGMV) form a helical membrane-spanning segment. At 189-522 (TRAGLRPVAR…SVDSQSARAR (334 aa)) the chain is on the cytoplasmic side. One can recognise an HAMP domain in the interval 190–242 (RAGLRPVARLTEAAERVARTDDLRPIPVFGSDELARLTESFNLMLRALAESRE). The Histidine kinase domain occupies 250 to 470 (DAGHELRTPL…SFYVLLPGRP (221 aa)). At His-253 the chain carries Phosphohistidine; by autocatalysis. The disordered stretch occupies residues 468 to 522 (GRPLPPAGHSTPAGESETDKAEAATDPAVPVAGDTANSRESANVISVDSQSARAR). Positions 502-522 (TANSRESANVISVDSQSARAR) are enriched in polar residues.

Requires Mg(2+) as cofactor. Mn(2+) serves as cofactor. In terms of processing, autophosphorylated.

It is found in the cell membrane. The enzyme catalyses ATP + protein L-histidine = ADP + protein N-phospho-L-histidine.. Member of the two-component regulatory system MprB/MprA which contributes to maintaining a balance among several systems involved in stress resistance and is required for establishment and maintenance of persistent infection in the host. In response to environmental signals MprB acts both as a membrane-associated protein kinase that undergoes autophosphorylation and subsequently transfers the phosphate to MprA, and a protein phosphatase that dephosphorylates phospho-MprA. This Mycobacterium avium (strain 104) protein is Signal transduction histidine-protein kinase/phosphatase MprB (mprB).